A 507-amino-acid polypeptide reads, in one-letter code: uncharacterized protein (507 aa).

12 consecutive transmembrane segments (helical) span residues 46 to 66, 83 to 103, 112 to 132, 141 to 161, 181 to 201, 207 to 227, 263 to 283, 299 to 319, 328 to 348, 354 to 374, 389 to 409, and 442 to 462; these read WIVLLAVALLNNTNTMSWIGY, AWLSMVYMMCTIPVGMFAMWA, AVLIAGWANGIGAVIRVISSL, FPICMTGQGIAAIAYPFIMFL, IGVMSNPLGVLMANLISPAIV, VIWLNIFTCVPSLIAMLIATF, IILLIVMGGGIGMFNCLYTVM, VCAALMIVGGVFGAAASSIFV, TLKIALGAAVIFGLIFLQLTL, VILGVTCLLFGVLGLATYPIG, TSTGLIVLSGQIQSVIYVFIM, and MSIMIFSLLATLLVLTLVVLF. Residues 477 to 493 show a composition bias toward basic and acidic residues; that stretch reads ATADKAKELSNQNKDRI. The tract at residues 477 to 507 is disordered; sequence ATADKAKELSNQNKDRITLQAESAVEPLQKK.

The protein localises to the membrane. This is an uncharacterized protein from Caenorhabditis elegans.